The following is a 222-amino-acid chain: UPF0758 protein Ppha_0935 (222 aa).

In terms of domain architecture, MPN spans 100–222; the sequence is KIQAARDVFE…CFSFRESGLL (123 aa). Residues His-171, His-173, and Asp-184 each coordinate Zn(2+). Positions 171–184 match the JAMM motif motif; it reads HNHPSGDVEPSNAD.

This sequence belongs to the UPF0758 family.

In Pelodictyon phaeoclathratiforme (strain DSM 5477 / BU-1), this protein is UPF0758 protein Ppha_0935.